The chain runs to 152 residues: Deoxyuridine 5'-triphosphate nucleotidohydrolase (152 aa).

Substrate-binding positions include Arg71–Gly73, Asn84, Leu88–Asp90, and Met98.

Belongs to the dUTPase family. The cofactor is Mg(2+).

It carries out the reaction dUTP + H2O = dUMP + diphosphate + H(+). Its pathway is pyrimidine metabolism; dUMP biosynthesis; dUMP from dCTP (dUTP route): step 2/2. This enzyme is involved in nucleotide metabolism: it produces dUMP, the immediate precursor of thymidine nucleotides and it decreases the intracellular concentration of dUTP so that uracil cannot be incorporated into DNA. The chain is Deoxyuridine 5'-triphosphate nucleotidohydrolase from Cronobacter sakazakii (strain ATCC BAA-894) (Enterobacter sakazakii).